Consider the following 132-residue polypeptide: NADPH-dependent 7-cyano-7-deazaguanine reductase (132 aa).

Catalysis depends on C43, which acts as the Thioimide intermediate. D50 acts as the Proton donor in catalysis. Substrate-binding positions include 65–67 and 84–85; these read VEL and HE.

It belongs to the GTP cyclohydrolase I family. QueF type 1 subfamily.

It localises to the cytoplasm. It catalyses the reaction 7-aminomethyl-7-carbaguanine + 2 NADP(+) = 7-cyano-7-deazaguanine + 2 NADPH + 3 H(+). It functions in the pathway tRNA modification; tRNA-queuosine biosynthesis. Functionally, catalyzes the NADPH-dependent reduction of 7-cyano-7-deazaguanine (preQ0) to 7-aminomethyl-7-deazaguanine (preQ1). The chain is NADPH-dependent 7-cyano-7-deazaguanine reductase from Thermosynechococcus vestitus (strain NIES-2133 / IAM M-273 / BP-1).